The primary structure comprises 243 residues: MAIYLTELSPETLTFPSPFTALDDPNGLLAFGGDLRLERIWAAYQQGIFPWYGPEDPILWWSPSPRAVFDPTRFQPAKSVKKFQRKHQYRVSVNHATSQVIEQCALTRPADQRWLNDSMRHAYGELAKQGRCHSVEVWQGEQLVGGLYGISVGQLFCGESMFSLATNASKIALWYFCDHFSRHQGQLIDCQVMNPHLQSLGATTLSREQFIQSLLSFKEKQVLSGCFETQWLATPTSPCAFED.

It belongs to the L/F-transferase family.

It localises to the cytoplasm. The catalysed reaction is N-terminal L-lysyl-[protein] + L-leucyl-tRNA(Leu) = N-terminal L-leucyl-L-lysyl-[protein] + tRNA(Leu) + H(+). It catalyses the reaction N-terminal L-arginyl-[protein] + L-leucyl-tRNA(Leu) = N-terminal L-leucyl-L-arginyl-[protein] + tRNA(Leu) + H(+). It carries out the reaction L-phenylalanyl-tRNA(Phe) + an N-terminal L-alpha-aminoacyl-[protein] = an N-terminal L-phenylalanyl-L-alpha-aminoacyl-[protein] + tRNA(Phe). Functions in the N-end rule pathway of protein degradation where it conjugates Leu, Phe and, less efficiently, Met from aminoacyl-tRNAs to the N-termini of proteins containing an N-terminal arginine or lysine. In Vibrio cholerae serotype O1 (strain ATCC 39315 / El Tor Inaba N16961), this protein is Leucyl/phenylalanyl-tRNA--protein transferase.